The primary structure comprises 195 residues: MTKVKICGLSTASAVETACQAGADYIGFVFAESRRRVSLEQAQKLAALVPSTVRKVGVFVSPSLAELQEAISVANLDLVQIHGDFDEELLTQIDRPVIQAYQVKGALKDVSQQADYLLFDAPLAGSGRTFDWQAFDKSQIHQPFFIAGGLNAGNVREAIQHFAPYAVDVSSGVETDAQKDLEKIKEFIERVKDGI.

It belongs to the TrpF family.

The enzyme catalyses N-(5-phospho-beta-D-ribosyl)anthranilate = 1-(2-carboxyphenylamino)-1-deoxy-D-ribulose 5-phosphate. The protein operates within amino-acid biosynthesis; L-tryptophan biosynthesis; L-tryptophan from chorismate: step 3/5. The polypeptide is N-(5'-phosphoribosyl)anthranilate isomerase (Streptococcus gordonii (strain Challis / ATCC 35105 / BCRC 15272 / CH1 / DL1 / V288)).